The chain runs to 387 residues: Cystathionine beta-lyase (387 aa).

At Lys204 the chain carries N6-(pyridoxal phosphate)lysine.

This sequence belongs to the trans-sulfuration enzymes family. In terms of assembly, homotetramer. It depends on pyridoxal 5'-phosphate as a cofactor.

The protein localises to the cytoplasm. It carries out the reaction L,L-cystathionine + H2O = L-homocysteine + pyruvate + NH4(+). It catalyses the reaction an S-substituted L-cysteine + H2O = a thiol + pyruvate + NH4(+). It participates in amino-acid biosynthesis; L-methionine biosynthesis via de novo pathway; L-homocysteine from L-cystathionine: step 1/1. Its function is as follows. Catalyzes the cleavage of cystathionine to homocysteine, pyruvate and ammonia during methionine biosynthesis. This chain is Cystathionine beta-lyase (metC), found in Coxiella burnetii (strain RSA 493 / Nine Mile phase I).